The chain runs to 560 residues: MFFRPCVHTVGRYSRARVPGLLSSLFFYRSCNNVLTNSLPTVTTAGRVSRYGYICRRSSTSAAERGVFLPFALTCRRNIHSIHEDEKKLERWKKIEESHPLDELVLDSVVKVFSNSTEYSKSKPWKTLDQKSSRGTGFAIAGRKILTNAHVVMAMNDHTFVDVKRHGSQIKYKAKVQKISHECDLAILEIDSDEFWKGMNPLELGDIPPLQEVVSVVGGENICITKGLVLRVETRIYDYSDSDLLSIQIDATINDENSGGPVIMGNKVVGVVYEIGFVIPTPIIKHFITSVQESRQYSCFGSLDLSYQSLENVQIRNHFKMSHEMTGILINKINSSSGAYKILRKDDIILAIDGVPIGNDEKVPFQNKRRIDFSYLVSMKKPGEKALVKVLRNGKEYEYNISLKPVKPNFTVQQFYNVPSYYIFGGFVFVPLTKTYLDSEHHQVKISERLADDINEGYQSLYGAQVEKVNGVEVKNLKHLCELIEECSTEDLRLEFKNHKVLVLNYESAKKATLQILERHKIKSVISKDICLPMLLDDPFKDNKINLLPWSVLPLMFDFS.

Residues 1–65 (MFFRPCVHTV…RRSSTSAAER (65 aa)) constitute a mitochondrion transit peptide. Residues 117–302 (TEYSKSKPWK…ESRQYSCFGS (186 aa)) are serine protease. Catalysis depends on charge relay system residues H150, D184, and S258. Positions 288 to 384 (ITSVQESRQY…YLVSMKKPGE (97 aa)) constitute a PDZ domain.

This sequence belongs to the peptidase S1C family.

It is found in the mitochondrion membrane. Putative serine protease. The protein is Putative protease Do-like 11, mitochondrial (DEGP11) of Arabidopsis thaliana (Mouse-ear cress).